We begin with the raw amino-acid sequence, 602 residues long: Threonine--tRNA ligase (602 aa).

The interval 208–499 is catalytic; the sequence is DHRKLGTELK…LTEHCAGEFP (292 aa). Residues Cys-300, His-351, and His-476 each coordinate Zn(2+).

It belongs to the class-II aminoacyl-tRNA synthetase family. As to quaternary structure, homodimer. It depends on Zn(2+) as a cofactor.

The protein resides in the cytoplasm. The catalysed reaction is tRNA(Thr) + L-threonine + ATP = L-threonyl-tRNA(Thr) + AMP + diphosphate + H(+). Functionally, catalyzes the attachment of threonine to tRNA(Thr) in a two-step reaction: L-threonine is first activated by ATP to form Thr-AMP and then transferred to the acceptor end of tRNA(Thr). Also edits incorrectly charged L-seryl-tRNA(Thr). This is Threonine--tRNA ligase from Campylobacter jejuni subsp. jejuni serotype O:2 (strain ATCC 700819 / NCTC 11168).